Consider the following 443-residue polypeptide: Thymidine phosphorylase (443 aa).

It belongs to the thymidine/pyrimidine-nucleoside phosphorylase family. Homodimer.

The enzyme catalyses thymidine + phosphate = 2-deoxy-alpha-D-ribose 1-phosphate + thymine. Its pathway is pyrimidine metabolism; dTMP biosynthesis via salvage pathway; dTMP from thymine: step 1/2. The enzymes which catalyze the reversible phosphorolysis of pyrimidine nucleosides are involved in the degradation of these compounds and in their utilization as carbon and energy sources, or in the rescue of pyrimidine bases for nucleotide synthesis. The chain is Thymidine phosphorylase from Aeromonas salmonicida (strain A449).